Here is a 684-residue protein sequence, read N- to C-terminus: Leishmanolysin-like peptidase (684 aa).

His257 is a binding site for Zn(2+). Glu258 is a catalytic residue. Residues His261 and His364 each coordinate Zn(2+).

The protein belongs to the peptidase M8 family. It depends on Zn(2+) as a cofactor.

It is found in the cytoplasm. Functionally, essential for the coordination of mitotic progression, and also plays a role in cell migration. The chain is Leishmanolysin-like peptidase from Drosophila pseudoobscura pseudoobscura (Fruit fly).